The chain runs to 79 residues: Hematopoietic cell signal transducer (79 aa).

The first 18 residues, 1–18 (MAPPGGILFLLLLPVAAA), serve as a signal peptide directing secretion. Residues 19-35 (QVTSGSCSGCGPLSLPL) are Extracellular-facing. The helical transmembrane segment at 36–56 (LAGLVAADAVVSLLIVVGVFV) threads the bilayer. Residues 57-79 (CGRPRSRPTQEDGKIYINMPGRG) lie on the Cytoplasmic side of the membrane. Tyr-72 carries the phosphotyrosine modification. The segment at 72-74 (YIN) is GRB2 binding site. The tract at residues 72–75 (YINM) is PIK3R1 binding site.

It belongs to the DAP10 family. In terms of assembly, homodimer; Disulfide-linked. Heterohexamer composed of four subunits of HCST/DAP10 and two subunits of KLRK1. Interacts (via transmembrane domain) with KLRK1 (via transmembrane domain); the interaction is required for KLRK1 NK cell surface and induces NK cell-mediated cytotoxicity. Interacts with PIK3R1 and GRB2. Interacts with CLEC5A. Forms an CLEC5A/TYROBP/HCST trimolecular complex depending almost solely on TYROBP. Interacts with KLRK1. Interacts with CD300H. Phosphorylated; PIK3R1 and GRB2 associate specifically with tyrosine-phosphorylated HCST. Post-translationally, O-glycosylated. Expressed predominantly in lymphohematopoietic tissues.

Its subcellular location is the membrane. Functionally, transmembrane adapter protein which associates with KLRK1 to form an activation receptor KLRK1-HCST in lymphoid and myeloid cells; this receptor plays a major role in triggering cytotoxicity against target cells expressing cell surface ligands such as MHC class I chain-related MICA and MICB, and UL16-binding proteins (ULBPs); these ligands are up-regulated by stress conditions and pathological state such as viral infection and tumor transformation. Functions as a docking site for PI3-kinase PIK3R1 and GRB2. Interaction of ULBPs with KLRK1-HCST triggers calcium mobilization and activation of the PIK3R1, MAP2K/ERK, and JAK2/STAT5 signaling pathways. Both PIK3R1 and GRB2 are required for full KLRK1-HCST-mediated activation and ultimate killing of target cells. In NK cells, KLRK1-HCST signaling directly induces cytotoxicity and enhances cytokine production initiated via DAP12/TYROBP-associated receptors. In T-cells, it provides primarily costimulation for TCR-induced signals. KLRK1-HCST receptor plays a role in immune surveillance against tumors and is required for cytolysis of tumors cells; indeed, melanoma cells that do not express KLRK1 ligands escape from immune surveillance mediated by NK cells. The chain is Hematopoietic cell signal transducer (HCST) from Sus scrofa (Pig).